The primary structure comprises 302 residues: Ribosomal RNA small subunit methyltransferase H (302 aa).

S-adenosyl-L-methionine contacts are provided by residues 43–45 (GGH), aspartate 62, phenylalanine 89, aspartate 105, and histidine 112. The interval 276-302 (EIANNPRSRSAKLRIAEKQAETGDEDN) is disordered.

It belongs to the methyltransferase superfamily. RsmH family.

It is found in the cytoplasm. The catalysed reaction is cytidine(1402) in 16S rRNA + S-adenosyl-L-methionine = N(4)-methylcytidine(1402) in 16S rRNA + S-adenosyl-L-homocysteine + H(+). Specifically methylates the N4 position of cytidine in position 1402 (C1402) of 16S rRNA. This Nostoc sp. (strain PCC 7120 / SAG 25.82 / UTEX 2576) protein is Ribosomal RNA small subunit methyltransferase H.